The chain runs to 331 residues: MFHKTEEFFPKKTDSDVDDMDTSDTQWGWFYLAECGKWHMFQPDTNIQCSVSSEDIEKSFKTNPCGSISFTTSKFSYKIDFAEMKQMNLVTGKQRLIKRAPFSISAFSYICENEAIPMPTHWENVNPDVPYQLVSLQNQTHEYNEVASLFGKTMDRNRIKRIQRIQNLDLWEFFCRKKAQLKKKRGVPQINEQMLFHGTSSEFVEAICIHNFDWRINGVHGAVFGKGTYFARDAAYSSRFCKDDIKHGNTFQIHGVSLQQRHLFRTYKSMFLARVLIGDYINGDSKYMRPPSKDGSYVNLYDSCVDDTWNPKIFVVFDANQIYPEYLIDFH.

K11 is modified (N6-(ADP-ribosyl)lysine). Residues 15–99 (SDVDDMDTSD…VTGKQRLIKR (85 aa)) form the WWE domain. 2 positions are modified to ADP-ribosylcysteine: C49 and C65. At D80 the chain carries ADP-ribosyl aspartic acid. Residues 116–331 (IPMPTHWENV…IYPEYLIDFH (216 aa)) form the PARP catalytic domain.

It belongs to the ARTD/PARP family. In terms of processing, auto-mono-ADP-ribosylated. Predominantly expressed in testis, preferentially in postmeiotic germ cells. Also detectable in other tissues, including liver, lung, spleen, thymus and brain.

It localises to the nucleus. It is found in the nuclear pore complex. The catalysed reaction is L-aspartyl-[protein] + NAD(+) = 4-O-(ADP-D-ribosyl)-L-aspartyl-[protein] + nicotinamide. It catalyses the reaction L-cysteinyl-[protein] + NAD(+) = S-(ADP-D-ribosyl)-L-cysteinyl-[protein] + nicotinamide + H(+). The enzyme catalyses L-glutamyl-[protein] + NAD(+) = 5-O-(ADP-D-ribosyl)-L-glutamyl-[protein] + nicotinamide. It carries out the reaction L-lysyl-[protein] + NAD(+) = N(6)-(ADP-D-ribosyl)-L-lysyl-[protein] + nicotinamide + H(+). Its function is as follows. Mono-ADP-ribosyltransferase that mediates mono-ADP-ribosylation of target proteins. Plays a role in nuclear envelope stability and nuclear remodeling during spermiogenesis. Inhibits the type I interferon activated signaling pathway. Mechanistically, mono-ADP-ribosylates beta-TrCP/BTRC to promote IFNAR1 ubiquitination and protect BTRC from ubiquitin-proteasome degradation. The sequence is that of Protein mono-ADP-ribosyltransferase PARP11 from Mus musculus (Mouse).